Consider the following 307-residue polypeptide: Leucine-rich repeat-containing protein 59 (307 aa).

Met-1 carries the N-acetylmethionine modification. Thr-2 bears the N-acetylthreonine; in Leucine-rich repeat-containing protein 59, N-terminally processed mark. Residues 2 to 244 lie on the Cytoplasmic side of the membrane; it reads TKAGSKGGNL…KPPPRKHTRS (243 aa). LRR repeat units lie at residues 10-31, 40-62, 63-84, 86-107, and 109-128; these read NLRD…NEVP, KATV…CGLT, HLVK…FGRL, NLQH…FAQL, and NLKW…AKVA. A phosphoserine mark is found at Ser-23 and Ser-25. At Lys-73 the chain carries N6-succinyllysine. Position 135 is an N6-acetyllysine (Lys-135). Positions 148–216 form a coiled coil; sequence MKAVQADQER…KASKREQEKK (69 aa). The disordered stretch occupies residues 150-241; the sequence is AVQADQERER…RPRKPPPRKH (92 aa). The segment covering 154-221 has biased composition (basic and acidic residues); the sequence is DQERERQRRL…EQEKKPKKEA (68 aa). Positions 229–241 are enriched in basic residues; it reads SGSRPRKPPPRKH. Residues 245–265 traverse the membrane as a helical segment; sequence WAVLKVLLLLLLLCVAGGLVV. Residues 266–307 are Lumenal-facing; that stretch reads CRVTGLHQQPLCTSVNTIYDNAVQGLRHHEILQWVLQTDSQQ.

In terms of assembly, can form homodimers. Interacts with SGO1. Interacts with FGF1.

It is found in the microsome membrane. The protein resides in the endoplasmic reticulum membrane. The protein localises to the nucleus envelope. Functionally, required for nuclear import of FGF1, but not that of FGF2. Might regulate nuclear import of exogenous FGF1 by facilitating interaction with the nuclear import machinery and by transporting cytosolic FGF1 to, and possibly through, the nuclear pores. The protein is Leucine-rich repeat-containing protein 59 (Lrrc59) of Mus musculus (Mouse).